Reading from the N-terminus, the 436-residue chain is VGFKAGVKDYKLTYYTPDYETKDTDILAAFRVTPQPGVPPEEAGAAVAAESSTGTWTTVWTDGLTSLDRYKGRCYHIEPVAGEDNQYICYVAYPLDLFEEGSVTNMFTSIVGNVFGFKALRALRLEDLRIPPAYVKTFQGPPHGIQVERDKLNKYGRPLLGCTIKPKLGLSAKNYGRAVYECLRGGLDFTKDDENVNSQPFMRWRDRFLFCAEAIYKAQAETGEIKGHYLNATAGTCEEMIKRAVFARELGVPIVMHDYLTGGFTANTSLAHYCRDNGLLLHIHRAMHAVIDRQKNHGMHFRVLAKALRMSGGDHIHAGTVVGKLEGEREITLGFVDLLRDDFVEKDRSRGIYFTQDWVSLPGVLPVASGGIHVWHMPALTEIFGDDSVLQFGGGTLGHPWGNAPGAVANRVALEACVQARNEGRDLAREGNEIIR.

K4 is subject to N6,N6,N6-trimethyllysine. The substrate site is built by N113 and T163. The Proton acceptor role is filled by K165. K167 serves as a coordination point for substrate. Mg(2+) is bound by residues K191, D193, and E194. K191 bears the N6-carboxylysine mark. Residue H284 is the Proton acceptor of the active site. Residues R285, H317, and S369 each contribute to the substrate site.

Belongs to the RuBisCO large chain family. Type I subfamily. Heterohexadecamer of 8 large chains and 8 small chains; disulfide-linked. The disulfide link is formed within the large subunit homodimers. Requires Mg(2+) as cofactor. The disulfide bond which can form in the large chain dimeric partners within the hexadecamer appears to be associated with oxidative stress and protein turnover.

Its subcellular location is the plastid. It localises to the chloroplast. It carries out the reaction 2 (2R)-3-phosphoglycerate + 2 H(+) = D-ribulose 1,5-bisphosphate + CO2 + H2O. It catalyses the reaction D-ribulose 1,5-bisphosphate + O2 = 2-phosphoglycolate + (2R)-3-phosphoglycerate + 2 H(+). Functionally, ruBisCO catalyzes two reactions: the carboxylation of D-ribulose 1,5-bisphosphate, the primary event in carbon dioxide fixation, as well as the oxidative fragmentation of the pentose substrate in the photorespiration process. Both reactions occur simultaneously and in competition at the same active site. The chain is Ribulose bisphosphate carboxylase large chain from Sanguinaria canadensis (Bloodroot).